Consider the following 198-residue polypeptide: Glycerol-3-phosphate acyltransferase (198 aa).

Helical transmembrane passes span 6–26 (FLPV…GLVL), 56–78 (LAAG…AGYI), 83–101 (AAMA…PVWL), 113–133 (IGIL…LWLA), and 155–175 (FLWW…TLLL).

Belongs to the PlsY family. As to quaternary structure, probably interacts with PlsX.

It localises to the cell inner membrane. It catalyses the reaction an acyl phosphate + sn-glycerol 3-phosphate = a 1-acyl-sn-glycero-3-phosphate + phosphate. It functions in the pathway lipid metabolism; phospholipid metabolism. In terms of biological role, catalyzes the transfer of an acyl group from acyl-phosphate (acyl-PO(4)) to glycerol-3-phosphate (G3P) to form lysophosphatidic acid (LPA). This enzyme utilizes acyl-phosphate as fatty acyl donor, but not acyl-CoA or acyl-ACP. The protein is Glycerol-3-phosphate acyltransferase of Bradyrhizobium diazoefficiens (strain JCM 10833 / BCRC 13528 / IAM 13628 / NBRC 14792 / USDA 110).